A 359-amino-acid polypeptide reads, in one-letter code: Glucose 1-dehydrogenase (359 aa).

Cys39 contacts Zn(2+). Thr41 contacts substrate. Zn(2+)-binding residues include His64 and Glu65. Residues Glu116 and Glu152 each coordinate substrate. Residue Glu152 coordinates Zn(2+). 183–186 provides a ligand contact to NADP(+); that stretch reads AGPI.

The protein belongs to the zinc-containing alcohol dehydrogenase family. Glucose 1-dehydrogenase subfamily. Zn(2+) serves as cofactor.

The catalysed reaction is D-glucose + NAD(+) = D-glucono-1,5-lactone + NADH + H(+). It catalyses the reaction D-glucose + NADP(+) = D-glucono-1,5-lactone + NADPH + H(+). Catalyzes the NAD(P)(+)-dependent oxidation of D-glucose to D-gluconate via gluconolactone. Can utilize both NAD(+) and NADP(+) as electron acceptor. Is involved in the degradation of glucose through a non-phosphorylative variant of the Entner-Doudoroff pathway. This chain is Glucose 1-dehydrogenase, found in Methanocella arvoryzae (strain DSM 22066 / NBRC 105507 / MRE50).